The following is a 544-amino-acid chain: Probable protein kinase UbiB (544 aa).

Residues 123–501 enclose the Protein kinase domain; that stretch reads DFDLVPLASA…KRQQATGKFL (379 aa). ATP is bound by residues 129 to 137 and K152; that span reads LASASIAQV. D287 serves as the catalytic Proton acceptor. The next 2 membrane-spanning stretches (helical) occupy residues 496-516 and 519-539; these read ATGK…AILV and TYEQ…LFSW.

Belongs to the ABC1 family. UbiB subfamily.

The protein resides in the cell inner membrane. It functions in the pathway cofactor biosynthesis; ubiquinone biosynthesis [regulation]. Is probably a protein kinase regulator of UbiI activity which is involved in aerobic coenzyme Q (ubiquinone) biosynthesis. The protein is Probable protein kinase UbiB of Vibrio vulnificus (strain YJ016).